A 340-amino-acid polypeptide reads, in one-letter code: tRNA-cytidine(32) 2-sulfurtransferase (340 aa).

The PP-loop motif motif lies at 74 to 79 (SGGKDS). [4Fe-4S] cluster-binding residues include C149, C152, and C240.

This sequence belongs to the TtcA family. Homodimer. Mg(2+) is required as a cofactor. The cofactor is [4Fe-4S] cluster.

The protein localises to the cytoplasm. The catalysed reaction is cytidine(32) in tRNA + S-sulfanyl-L-cysteinyl-[cysteine desulfurase] + AH2 + ATP = 2-thiocytidine(32) in tRNA + L-cysteinyl-[cysteine desulfurase] + A + AMP + diphosphate + H(+). It functions in the pathway tRNA modification. In terms of biological role, catalyzes the ATP-dependent 2-thiolation of cytidine in position 32 of tRNA, to form 2-thiocytidine (s(2)C32). The sulfur atoms are provided by the cysteine/cysteine desulfurase (IscS) system. This Burkholderia ambifaria (strain MC40-6) protein is tRNA-cytidine(32) 2-sulfurtransferase.